The following is a 298-amino-acid chain: Probable pyridoxal 5'-phosphate synthase subunit SNZ3 (298 aa).

D21 is a binding site for D-ribose 5-phosphate. K78 functions as the Schiff-base intermediate with D-ribose 5-phosphate in the catalytic mechanism. D-ribose 5-phosphate-binding positions include G150, G213, and 234–235 (GS).

This sequence belongs to the PdxS/SNZ family. Homohexamer. Interacts with THI11.

The catalysed reaction is aldehydo-D-ribose 5-phosphate + D-glyceraldehyde 3-phosphate + L-glutamine = pyridoxal 5'-phosphate + L-glutamate + phosphate + 3 H2O + H(+). It functions in the pathway cofactor biosynthesis; pyridoxal 5'-phosphate biosynthesis. Catalyzes the formation of pyridoxal 5'-phosphate from ribose 5-phosphate (RBP), glyceraldehyde 3-phosphate (G3P) and ammonia. The ammonia is provided by a SNO isoform. Can also use ribulose 5-phosphate and dihydroxyacetone phosphate as substrates, resulting from enzyme-catalyzed isomerization of RBP and G3P, respectively. This is Probable pyridoxal 5'-phosphate synthase subunit SNZ3 (SNZ3) from Saccharomyces cerevisiae (strain ATCC 204508 / S288c) (Baker's yeast).